Consider the following 624-residue polypeptide: MDSHCDCAEPPAAEQPSGKINKTAFKLFKRRKSGGTMPSIFGVRSKGGEGKGASKTGMVRSRTHDGLADAVLESGKKEDAGGGEAQGKDAPSRAAGGLGGSASSSVAKSHSFFSLLRKNGRPENGKAAENAEQRAGGRQKKGLKGIFSSMRWHRKDKIGKEERGEASEIPSGLIMPGSLTASLECIKEETPKPLSETPNGAGDTGVESQQEKRGGDACVSAEEPQAGGGESRDSKTPPGEDPAAAARRLEELCGERPDPGAGEVGTAKDAAITGDIPITTIPPVEPHCDSGQETAAAPDPSSVDPPSEQSIDRICLMFADVTSLKSFDSLTGCGDIIADQEEDVGGGSGGCEKSTPGAGKLGAPKKHPTMVAYQGGGEEMASPDQVDDTYLQEFWDMLSQTEETETGGGGGGGGGTKTPEGLKENRGTEGAQNRVAVKRGGLNQIPIHLNNKEEQKGREKEQHEGVPNSDEGYWDSTTPGPEEDSTTSIQKETLPRDSYSGDALYDLYAEPDENPPGGPPEEEVTCMPRSKPVSPITTTCSLKTPSSTVKDSKIPISIKHLASHPASHGTDTSNSHHVAHHHLAKSEMHRTKIPVSKVLVRRVSNRGLAGTTVKAATHQDSAKK.

Disordered stretches follow at residues 1–308 and 342–596; these read MDSH…PPSE and EDVG…IPVS. Over residues 74–91 the composition is skewed to basic and acidic residues; that stretch reads SGKKEDAGGGEAQGKDAP. Positions 101 to 111 are enriched in low complexity; it reads SASSSVAKSHS. Composition is skewed to basic and acidic residues over residues 120–132 and 247–258; these read GRPENGKAAENAE and RRLEELCGERPD. Low complexity-rich tracts occupy residues 272–282 and 295–307; these read ITGDIPITTIP and AAAPDPSSVDPPS. Residues 406–416 are compositionally biased toward gly residues; that stretch reads TGGGGGGGGGT. Positions 450–464 are enriched in basic and acidic residues; sequence NNKEEQKGREKEQHE. Residues 535-549 show a composition bias toward polar residues; sequence PITTTCSLKTPSSTV.

Belongs to the Amer family.

It localises to the cell membrane. In terms of biological role, negative regulator of the canonical Wnt signaling pathway involved in neuroectodermal patterning. Acts by specifically binding phosphatidylinositol 4,5-bisphosphate (PtdIns(4,5)P2), translocating to the cell membrane and interacting with key regulators of the canonical Wnt signaling pathway, such as components of the beta-catenin destruction complex. The polypeptide is APC membrane recruitment protein 2 (AMER2) (Gallus gallus (Chicken)).